The chain runs to 426 residues: Phosphoribosylamine--glycine ligase (426 aa).

Positions 109-312 constitute an ATP-grasp domain; sequence KEVMEAAGVA…LAGVLNAVAT (204 aa). 138-193 is a binding site for ATP; the sequence is LDYFGPMYVVKDDGLAAGKGVVVTADRAEARQHIHLVHAAGNPVLLESFLDGPEVS. Glu-282 and Asn-284 together coordinate Mg(2+).

It belongs to the GARS family. Mg(2+) is required as a cofactor. Requires Mn(2+) as cofactor.

The catalysed reaction is 5-phospho-beta-D-ribosylamine + glycine + ATP = N(1)-(5-phospho-beta-D-ribosyl)glycinamide + ADP + phosphate + H(+). It functions in the pathway purine metabolism; IMP biosynthesis via de novo pathway; N(1)-(5-phospho-D-ribosyl)glycinamide from 5-phospho-alpha-D-ribose 1-diphosphate: step 2/2. The sequence is that of Phosphoribosylamine--glycine ligase from Corynebacterium ammoniagenes (Brevibacterium ammoniagenes).